The following is a 570-amino-acid chain: Frizzled-2 (570 aa).

The first 28 residues, Met1–Ala28, serve as a signal peptide directing secretion. The Extracellular portion of the chain corresponds to Gln29 to Trp252. One can recognise an FZ domain in the interval Pro39–Gln158. 5 disulfide bridges follow: Cys44-Cys105, Cys52-Cys98, Cys89-Cys126, Cys115-Cys155, and Cys119-Cys143. A glycan (N-linked (GlcNAc...) asparagine) is linked at Asn58. Asn159 carries an N-linked (GlcNAc...) asparagine glycan. The interval Pro166–Pro194 is disordered. Over residues Pro179–Ala193 the composition is skewed to gly residues. A helical transmembrane segment spans residues Ile253–Val273. Topologically, residues Ala274–Pro284 are cytoplasmic. A helical membrane pass occupies residues Ile285–Leu305. Residues Gln306–Cys332 lie on the Extracellular side of the membrane. Residues Thr333 to Leu353 traverse the membrane as a helical segment. Over Ser354–Gln375 the chain is Cytoplasmic. A helical transmembrane segment spans residues Tyr376–Gly396. Over Gln397–Gly419 the chain is Extracellular. A helical transmembrane segment spans residues Phe420–Phe440. Residues Val441–Arg466 lie on the Cytoplasmic side of the membrane. The chain crosses the membrane as a helical span at residues Ile467–Tyr487. Topologically, residues Glu488 to Thr524 are extracellular. Residues Val525–Trp545 form a helical membrane-spanning segment. Topologically, residues Ser546–Val570 are cytoplasmic. Residues Lys548–Trp553 carry the Lys-Thr-X-X-X-Trp motif, mediates interaction with the PDZ domain of Dvl family members motif. The PDZ-binding motif lies at Thr568–Val570.

It belongs to the G-protein coupled receptor Fz/Smo family. Ubiquitinated by ZNRF3, leading to its degradation by the proteasome. As to expression, widely expressed. Most abundant in kidney, liver, uterus, ovary and heart. Lower levels seen in brain and intestine. Extremely low in calvaria, mammary glands and testis.

The protein resides in the membrane. It localises to the cell membrane. In terms of biological role, receptor for Wnt proteins. Most of frizzled receptors are coupled to the beta-catenin canonical signaling pathway, which leads to the activation of disheveled proteins, inhibition of GSK-3 kinase, nuclear accumulation of beta-catenin and activation of Wnt target genes. A second signaling pathway involving PKC and calcium fluxes has been seen for some family members, but it is not yet clear if it represents a distinct pathway or if it can be integrated in the canonical pathway, as PKC seems to be required for Wnt-mediated inactivation of GSK-3 kinase. Both pathways seem to involve interactions with G-proteins. May be involved in transduction and intercellular transmission of polarity information during tissue morphogenesis and/or in differentiated tissues. Activation by Wnt5A stimulates PKC activity via a G-protein-dependent mechanism. This is Frizzled-2 (Fzd2) from Rattus norvegicus (Rat).